A 253-amino-acid chain; its full sequence is Imidazole glycerol phosphate synthase subunit HisF (253 aa).

Residues aspartate 12 and aspartate 131 contribute to the active site.

This sequence belongs to the HisA/HisF family. As to quaternary structure, heterodimer of HisH and HisF.

It is found in the cytoplasm. The enzyme catalyses 5-[(5-phospho-1-deoxy-D-ribulos-1-ylimino)methylamino]-1-(5-phospho-beta-D-ribosyl)imidazole-4-carboxamide + L-glutamine = D-erythro-1-(imidazol-4-yl)glycerol 3-phosphate + 5-amino-1-(5-phospho-beta-D-ribosyl)imidazole-4-carboxamide + L-glutamate + H(+). It functions in the pathway amino-acid biosynthesis; L-histidine biosynthesis; L-histidine from 5-phospho-alpha-D-ribose 1-diphosphate: step 5/9. Functionally, IGPS catalyzes the conversion of PRFAR and glutamine to IGP, AICAR and glutamate. The HisF subunit catalyzes the cyclization activity that produces IGP and AICAR from PRFAR using the ammonia provided by the HisH subunit. In Corynebacterium urealyticum (strain ATCC 43042 / DSM 7109), this protein is Imidazole glycerol phosphate synthase subunit HisF.